Reading from the N-terminus, the 253-residue chain is Phosphoadenosine 5'-phosphosulfate reductase (253 aa).

Catalysis depends on C239, which acts as the Nucleophile; cysteine thiosulfonate intermediate.

Belongs to the PAPS reductase family. CysH subfamily.

The protein localises to the cytoplasm. It carries out the reaction [thioredoxin]-disulfide + sulfite + adenosine 3',5'-bisphosphate + 2 H(+) = [thioredoxin]-dithiol + 3'-phosphoadenylyl sulfate. It functions in the pathway sulfur metabolism; hydrogen sulfide biosynthesis; sulfite from sulfate: step 3/3. In terms of biological role, catalyzes the formation of sulfite from phosphoadenosine 5'-phosphosulfate (PAPS) using thioredoxin as an electron donor. In Aliivibrio fischeri (strain ATCC 700601 / ES114) (Vibrio fischeri), this protein is Phosphoadenosine 5'-phosphosulfate reductase.